The sequence spans 785 residues: Probable cationic amino acid transporter (785 aa).

A run of 15 helical transmembrane segments spans residues 58–78 (LVSL…SGLV), 83–103 (AGPG…LSGV), 119–141 (AYTY…NLIL), 187–207 (YPDI…ALGV), 216–236 (VLNV…LFFV), 251–271 (WSGV…FDII), 291–311 (ASLV…TLMV), 337–357 (IVAI…LFPM), 360–380 (VIYA…VSTY), 384–404 (PAVA…LVSL), 407–427 (LIEM…VCVL), 568–588 (CVVL…FGSG), 596–616 (WAVL…FIII), 628–648 (MAPC…YLML), and 655–675 (WIRF…YGMW). A disordered region spans residues 715-785 (DQGPFQNWGK…VDDDLDDPLE (71 aa)). The span at 727–740 (QQKQPQQEQSEPQS) shows a compositional bias: low complexity. Positions 775–785 (VVDDDLDDPLE) are enriched in acidic residues.

This sequence belongs to the amino acid-polyamine-organocation (APC) superfamily.

It is found in the lysosome membrane. Its function is as follows. May be involved in arginine transport. The chain is Probable cationic amino acid transporter (slc7a14a) from Danio rerio (Zebrafish).